The following is a 479-amino-acid chain: Bifunctional aspartate aminotransferase and glutamate/aspartate-prephenate aminotransferase (479 aa).

The transit peptide at 1–79 directs the protein to the chloroplast; sequence MAATTTTSSS…VEVDISLSPR (79 aa). Residue Gly111 coordinates L-aspartate. Pyridoxal 5'-phosphate is bound at residue 172–173; that stretch reads AK. The L-aspartate site is built by Trp197 and Asn247. Pyridoxal 5'-phosphate contacts are provided by residues Asn247, Tyr279, and 307-309; that span reads GFS. Lys310 bears the N6-(pyridoxal phosphate)lysine mark. Position 318 (Arg318) interacts with pyridoxal 5'-phosphate. L-aspartate is bound at residue Arg449.

Belongs to the class-I pyridoxal-phosphate-dependent aminotransferase family. Homodimer. The cofactor is pyridoxal 5'-phosphate. In terms of tissue distribution, expressed in flowers, pistils, stamens, ovaries and at lower levels in leaves and sepals.

Its subcellular location is the plastid. It is found in the chloroplast. It carries out the reaction L-aspartate + 2-oxoglutarate = oxaloacetate + L-glutamate. It catalyses the reaction L-arogenate + oxaloacetate = prephenate + L-aspartate. The enzyme catalyses L-arogenate + 2-oxoglutarate = prephenate + L-glutamate. Its pathway is amino-acid biosynthesis; L-phenylalanine biosynthesis; L-arogenate from prephenate (L-Asp route): step 1/1. It participates in amino-acid biosynthesis; L-phenylalanine biosynthesis; L-arogenate from prephenate (L-Glu route): step 1/1. In terms of biological role, prokaryotic-type aspartate aminotransferase. Also has a prenate transaminase activity. Involved in the aromatic amino acids biosynthesis pathway via the arogenate route. Required for the transamination of prephenate into arogenate. Can use 2-oxoglutarate, oxaloacetate and prephenate as substrates, but not phenylpyruvate or 4-hydroxyphenylpyruvate. This is Bifunctional aspartate aminotransferase and glutamate/aspartate-prephenate aminotransferase from Petunia hybrida (Petunia).